A 117-amino-acid chain; its full sequence is Multidrug resistance protein EbrB (117 aa).

4 helical membrane-spanning segments follow: residues 3–23 (GLLY…MLKL), 31–51 (WPIA…SFSL), 59–79 (AYAT…FLLF), and 81–101 (ETIS…VVVL).

Belongs to the drug/metabolite transporter (DMT) superfamily. Small multidrug resistance (SMR) (TC 2.A.7.1) family. EbrA/EbrB subfamily. The efflux pump is composed of EbrA and EbrB.

The protein resides in the cell membrane. Its function is as follows. Part of a multidrug efflux pump. Confers resistance to cationic lipophilic dyes such as ethidium bromide, acriflavine, pyronine Y and safranin O. The efflux is probably coupled to an influx of protons. The sequence is that of Multidrug resistance protein EbrB (ebrB) from Bacillus subtilis (strain 168).